The sequence spans 130 residues: Protein ApaG (130 aa).

Residues 3–127 (KAETRGISVI…FSLDVPHMRR (125 aa)) form the ApaG domain.

The protein is Protein ApaG of Methylobacterium nodulans (strain LMG 21967 / CNCM I-2342 / ORS 2060).